The sequence spans 184 residues: GTP cyclohydrolase 1 (184 aa).

Residues C75, H78, and C146 each contribute to the Zn(2+) site.

Belongs to the GTP cyclohydrolase I family. As to quaternary structure, homomer.

It catalyses the reaction GTP + H2O = 7,8-dihydroneopterin 3'-triphosphate + formate + H(+). The protein operates within cofactor biosynthesis; 7,8-dihydroneopterin triphosphate biosynthesis; 7,8-dihydroneopterin triphosphate from GTP: step 1/1. This Streptococcus pneumoniae (strain Taiwan19F-14) protein is GTP cyclohydrolase 1.